Here is a 272-residue protein sequence, read N- to C-terminus: MSVVSLLGVRVLNNPAAFTAPYEFEITFECLEQLQKDLEWKLTYVGSATSSEYDQELDSLLVGPIPVGVNKFIFEADPPDLKRIPTSEILGVTVILLTCSYDGREFVRVGYYVNNEYDSEELNKEPPTKPIIERVRRNVLAEKPRVTRFHIKWDTDSDPTEFPPVQPDADVLEDDGETYGAEELELEAALKRELEELDSQDADKMDVGEGRDDVDDNESDAGSEDLEGETSGSDDEEEEEGFEGEDEDVEMGDDSNPTPDQHQHPNPEVMVH.

Disordered regions lie at residues 152–173 (KWDTDSDPTEFPPVQPDADVLE) and 195–272 (EELD…VMVH). Positions 181 to 206 (AEELELEAALKRELEELDSQDADKMD) form a coiled coil. Over residues 201–211 (DADKMDVGEGR) the composition is skewed to basic and acidic residues. The span at 212–253 (DDVDDNESDAGSEDLEGETSGSDDEEEEEGFEGEDEDVEMGD) shows a compositional bias: acidic residues. Residues 261–272 (QHQHPNPEVMVH) are compositionally biased toward basic and acidic residues.

Belongs to the ASF1 family. As to quaternary structure, interacts with histone H3 and histone H4.

Its subcellular location is the nucleus. Its function is as follows. Histone chaperone that facilitates histone deposition and histone exchange and removal during nucleosome assembly and disassembly. The chain is Histone chaperone ASF1 (ASF1) from Coccidioides immitis (strain RS) (Valley fever fungus).